The primary structure comprises 209 residues: MPVAVMAESAFSFKKLLDQCENQELEAPGGIATPPVYGQLLALYLLHNDMNNARYLWKRIPPAIKSANSELGGIWSVGQRIWQRDFPGIYTTINAHQWSETVQPIMEALRDATRRRAFALVSQAYTSIVADDFAAFVGLPVEEAVKGILEQGWQADSTTRMVLPRKPVAGALDVSFNKFIPLSEPAPVPPIPNEQQLARLTDYVAFLEN.

Residues 8–179 (ESAFSFKKLL…GALDVSFNKF (172 aa)) enclose the PCI domain. S175 bears the Phosphoserine mark.

The protein belongs to the CSN8 family. Component of the CSN complex, composed of COPS1/GPS1, COPS2, COPS3, COPS4, COPS5, COPS6, COPS7 (COPS7A or COPS7B), COPS8 and COPS9. In the complex, it probably interacts directly with COPS3, COPS4 and COPS7 (COPS7A or COPS7B).

The protein resides in the cytoplasm. It is found in the nucleus. Functionally, component of the COP9 signalosome complex (CSN), a complex involved in various cellular and developmental processes. The CSN complex is an essential regulator of the ubiquitin (Ubl) conjugation pathway by mediating the deneddylation of the cullin subunits of SCF-type E3 ligase complexes, leading to decrease the Ubl ligase activity of SCF-type complexes such as SCF, CSA or DDB2. The complex is also involved in phosphorylation of p53/TP53, c-jun/JUN, IkappaBalpha/NFKBIA, ITPK1 and IRF8/ICSBP, possibly via its association with CK2 and PKD kinases. CSN-dependent phosphorylation of TP53 and JUN promotes and protects degradation by the Ubl system, respectively. In Pongo abelii (Sumatran orangutan), this protein is COP9 signalosome complex subunit 8 (COPS8).